We begin with the raw amino-acid sequence, 117 residues long: UPF0102 protein Rsph17029_0461 (117 aa).

It belongs to the UPF0102 family.

This Cereibacter sphaeroides (strain ATCC 17029 / ATH 2.4.9) (Rhodobacter sphaeroides) protein is UPF0102 protein Rsph17029_0461.